The chain runs to 300 residues: MALLDLKQFYELREGCDDKGILVMDGDWLVFQAMSAAEFDASWEEEIWHRCCDHAKARQILEDSIKSYETRKKAWAGAPIVLAFTDSVNWRKELVDPNYKANRKAVKKPVGYFEFLDALFEREEFYCIREPMLEGDDVMGVIASNPSAFGARKAVIISCDKDFKTIPNCDFLWCTTGNILTQTEESADWWHLFQTIKGDITDGYSGIAGWGDTAEDFLNNPFITEPKTSVLKSGKNKGQEVTKWVKRDPEPHETLWDCIKSIGAKAGMTEEDIIKQGQMARILRFNEYNFIDKEIYLWRP.

It carries out the reaction Exonucleolytic cleavage in the 5'- to 3'-direction to yield nucleoside 5'-phosphates.. In terms of biological role, plays an essential role in phage DNA replication by participating in the removal of DNA-linked RNA primers. Participates also in T7 DNA packaging, host DNA degradation and phage genetic recombination. The polypeptide is Exonuclease (Escherichia phage T7 (Bacteriophage T7)).